Consider the following 323-residue polypeptide: Lipoyl synthase (323 aa).

The tract at residues M1–E27 is disordered. C61, C66, C72, C87, C91, C94, and S300 together coordinate [4Fe-4S] cluster. The Radical SAM core domain occupies W73–L289.

Belongs to the radical SAM superfamily. Lipoyl synthase family. Requires [4Fe-4S] cluster as cofactor.

Its subcellular location is the cytoplasm. The catalysed reaction is [[Fe-S] cluster scaffold protein carrying a second [4Fe-4S](2+) cluster] + N(6)-octanoyl-L-lysyl-[protein] + 2 oxidized [2Fe-2S]-[ferredoxin] + 2 S-adenosyl-L-methionine + 4 H(+) = [[Fe-S] cluster scaffold protein] + N(6)-[(R)-dihydrolipoyl]-L-lysyl-[protein] + 4 Fe(3+) + 2 hydrogen sulfide + 2 5'-deoxyadenosine + 2 L-methionine + 2 reduced [2Fe-2S]-[ferredoxin]. It functions in the pathway protein modification; protein lipoylation via endogenous pathway; protein N(6)-(lipoyl)lysine from octanoyl-[acyl-carrier-protein]: step 2/2. Catalyzes the radical-mediated insertion of two sulfur atoms into the C-6 and C-8 positions of the octanoyl moiety bound to the lipoyl domains of lipoate-dependent enzymes, thereby converting the octanoylated domains into lipoylated derivatives. The polypeptide is Lipoyl synthase (Agrobacterium fabrum (strain C58 / ATCC 33970) (Agrobacterium tumefaciens (strain C58))).